Here is an 88-residue protein sequence, read N- to C-terminus: Meiosis expressed gene 1 protein homolog (88 aa).

It belongs to the MEIG1 family. In terms of assembly, interacts with PACRG. Interacts with MORN3.

Functionally, essential for spermiogenesis. The polypeptide is Meiosis expressed gene 1 protein homolog (Homo sapiens (Human)).